Reading from the N-terminus, the 143-residue chain is MAKKVAGQLKLQVKAGSANPSPPIGPALGQRGINIMEFCKAFNAATQEMEKGMPIPVVITYYQDKSFTFAMKQPPVSYWLKKEAKITSGSKTPGKGPKAGTLTKAQIKTIAEAKMKDLNAADIEGAMAMIEGSARAMGLEVVG.

It belongs to the universal ribosomal protein uL11 family. As to quaternary structure, part of the ribosomal stalk of the 50S ribosomal subunit. Interacts with L10 and the large rRNA to form the base of the stalk. L10 forms an elongated spine to which L12 dimers bind in a sequential fashion forming a multimeric L10(L12)X complex. In terms of processing, one or more lysine residues are methylated.

In terms of biological role, forms part of the ribosomal stalk which helps the ribosome interact with GTP-bound translation factors. This is Large ribosomal subunit protein uL11 from Rhizobium etli (strain CIAT 652).